Consider the following 397-residue polypeptide: Cysteine desulfurase (397 aa).

Pyridoxal 5'-phosphate is bound by residues Asn-148, Gln-176, and 196–198 (SAH). Residue Lys-199 is modified to N6-(pyridoxal phosphate)lysine. A pyridoxal 5'-phosphate-binding site is contributed by Thr-234. Cys-321 serves as the catalytic Cysteine persulfide intermediate. Cys-321 provides a ligand contact to [2Fe-2S] cluster.

It belongs to the class-V pyridoxal-phosphate-dependent aminotransferase family. NifS/IscS subfamily. Homodimer. Pyridoxal 5'-phosphate serves as cofactor.

The enzyme catalyses (sulfur carrier)-H + L-cysteine = (sulfur carrier)-SH + L-alanine. In terms of biological role, catalyzes the removal of elemental sulfur atoms from cysteine to produce alanine. Seems to participate in the biosynthesis of the nitrogenase metalloclusters by providing the inorganic sulfur required for the Fe-S core formation. The polypeptide is Cysteine desulfurase (Klebsiella pneumoniae).